The following is a 287-amino-acid chain: Genetic interactor of prohibitin 7, mitochondrial (287 aa).

Residues 1-24 (MVLSNVKIFRLKSHRAFRIGPMIK) constitute a mitochondrion transit peptide. A helical transmembrane segment spans residues 250–266 (SKAIISFVVFVSIYVWL).

This sequence belongs to the GEP7 family.

Its subcellular location is the mitochondrion membrane. Functionally, involved in respiratory growth and required for cell survival in the absence of prohibitins or GEM1. This is Genetic interactor of prohibitin 7, mitochondrial (GEP7) from Saccharomyces cerevisiae (strain ATCC 204508 / S288c) (Baker's yeast).